Here is a 134-residue protein sequence, read N- to C-terminus: ATP synthase epsilon chain (134 aa).

This sequence belongs to the ATPase epsilon chain family. F-type ATPases have 2 components, CF(1) - the catalytic core - and CF(0) - the membrane proton channel. CF(1) has five subunits: alpha(3), beta(3), gamma(1), delta(1), epsilon(1). CF(0) has three main subunits: a, b and c.

It is found in the cell membrane. Produces ATP from ADP in the presence of a proton gradient across the membrane. The sequence is that of ATP synthase epsilon chain from Staphylococcus saprophyticus subsp. saprophyticus (strain ATCC 15305 / DSM 20229 / NCIMB 8711 / NCTC 7292 / S-41).